The sequence spans 143 residues: Cytochrome c-type biogenesis protein CcmE (143 aa).

The Cytoplasmic portion of the chain corresponds to 1–8 (MTPVRRRK). Residues 9 to 29 (LFILLFALSVLSAAAALVLYA) traverse the membrane as a helical; Signal-anchor for type II membrane protein segment. The Periplasmic segment spans residues 30–143 (LRQNISLFYT…KSALADKVKQ (114 aa)). The heme site is built by His124 and Tyr128.

Belongs to the CcmE/CycJ family.

It localises to the cell inner membrane. In terms of biological role, heme chaperone required for the biogenesis of c-type cytochromes. Transiently binds heme delivered by CcmC and transfers the heme to apo-cytochromes in a process facilitated by CcmF and CcmH. This chain is Cytochrome c-type biogenesis protein CcmE, found in Legionella pneumophila.